A 440-amino-acid polypeptide reads, in one-letter code: DNA polymerase delta small subunit (440 aa).

The protein belongs to the DNA polymerase delta/II small subunit family. As to quaternary structure, heterodimer with subunits of 125 kDa and 50 kDa.

The protein resides in the nucleus. The enzyme catalyses DNA(n) + a 2'-deoxyribonucleoside 5'-triphosphate = DNA(n+1) + diphosphate. Functionally, the function of the small subunit is not yet clear. This Arabidopsis thaliana (Mouse-ear cress) protein is DNA polymerase delta small subunit (POLD2).